The chain runs to 215 residues: Adenylate kinase (215 aa).

10–15 (GAGKGT) is a binding site for ATP. The interval 30–59 (STGDILRENVKNQTELGKKAKEYMDKGLLV) is NMP. AMP-binding positions include Thr31, Arg36, 57–59 (LLV), 85–88 (GFPR), and Gln92. The LID stretch occupies residues 126–163 (GRRICKSCGASFHVVYRPPKKEGICDICGGQLYQREDD). An ATP-binding site is contributed by Arg127. Residues Cys130 and Cys133 each contribute to the Zn(2+) site. 136-137 (SF) contacts ATP. Zn(2+)-binding residues include Cys150 and Cys153. AMP-binding residues include Arg160 and Arg171. Glu199 provides a ligand contact to ATP.

It belongs to the adenylate kinase family. In terms of assembly, monomer.

It is found in the cytoplasm. The enzyme catalyses AMP + ATP = 2 ADP. It participates in purine metabolism; AMP biosynthesis via salvage pathway; AMP from ADP: step 1/1. Functionally, catalyzes the reversible transfer of the terminal phosphate group between ATP and AMP. Plays an important role in cellular energy homeostasis and in adenine nucleotide metabolism. This chain is Adenylate kinase, found in Caldicellulosiruptor saccharolyticus (strain ATCC 43494 / DSM 8903 / Tp8T 6331).